The primary structure comprises 344 residues: Heat-inducible transcription repressor HrcA (344 aa).

Belongs to the HrcA family.

In terms of biological role, negative regulator of class I heat shock genes (grpE-dnaK-dnaJ and groELS operons). Prevents heat-shock induction of these operons. In Streptococcus pneumoniae (strain 70585), this protein is Heat-inducible transcription repressor HrcA.